A 266-amino-acid chain; its full sequence is DNA damage-regulated autophagy modulator protein 2 (266 aa).

6 helical membrane-spanning segments follow: residues 8–28 (LSFLPSALVIWTSAAFIFSYI), 53–73 (KCLFGAMLNIAAVLCIATIYV), 88–108 (IIKLNKAGLVLGILSCLGLSI), 118–138 (FAAHVSGAVLTFGMGSLYMFV), 160–180 (LLLVIWCGVSALSMLTCSSVL), and 207–227 (ITTAAEWSMSFSFFGFFLTYI).

This sequence belongs to the DRAM/TMEM150 family. Expression is down-regulated in ovarian tumors (at protein level). Widely expressed with highest levels in placenta and heart. Expressed in the retina. Not detected in brain or thymus.

Its subcellular location is the lysosome membrane. It localises to the photoreceptor inner segment. The protein resides in the apical cell membrane. In terms of biological role, plays a role in the initiation of autophagy. In the retina, might be involved in the process of photoreceptor cells renewal and recycling to preserve visual function. Induces apoptotic cell death when coexpressed with DRAM1. The chain is DNA damage-regulated autophagy modulator protein 2 (DRAM2) from Homo sapiens (Human).